A 562-amino-acid polypeptide reads, in one-letter code: Septation ring formation regulator EzrA (562 aa).

The Extracellular segment spans residues 1–2 (ME). A helical membrane pass occupies residues 3–21 (FVIGLLIVLLALFAAGYFF). Residues 22 to 562 (RKKIYAEIDR…VEKIKADISA (541 aa)) lie on the Cytoplasmic side of the membrane. 2 coiled-coil regions span residues 377–425 (YSLL…LKKT) and 470–497 (MEEAGAHLKQAEDIVNRASRESEELVEQ).

The protein belongs to the EzrA family. Post-translationally, may be degraded by FtsH protease.

It localises to the cell membrane. The protein resides in the membrane raft. Negative regulator of FtsZ ring formation; modulates the frequency and position of FtsZ ring formation. Inhibits FtsZ ring formation at polar sites. Interacts either with FtsZ or with one of its binding partners to promote depolymerization. This is Septation ring formation regulator EzrA from Bacillus subtilis (strain 168).